The following is a 484-amino-acid chain: MSIRNTINRIIIRRNMSDSIRHYDYLVIGGGSGGVASSRRAASYGAKTLLIEAKAMGGTCVNKGCVPKKVMWYASDLATRIGHAHSYNLFEDLPLTKENLTFNWPEFKKKRDAYIHRLNGIYERNLTKEGVDYVYGWASFTVDGKVQVKKADNCTETYTADHILVATGGKPIYPAKIPGYDYGVSSDEFFELEDQPKKVVVVGAGYIGVEIAGVFNGLGSDSHLVIRGETVLRKFDDCIQETVTDTYIKEGVNIHKSSNVTKVEKDESTGKLNIQLDTGKNIDNVDSLIWTIGRRSLLGLGLENIGVKLDAKEQIVVDEYQNSSVKNVYSLGDVVGKVELTPVAIAAGRKLSNRLFGPEKFKNQKQDYENVPSVVFSHPEAGSIGLSEREAIEKFGKDNVKVYNSKFNAMYYAMMEEKDKTPTRYKLVCTGEEEKVVGLHIIGDSSAEILQGFGVAIKMGATKADFDSCVAIHPTSAEELVTLT.

Positions 32 and 33 each coordinate FAD. S32 lines the glutathione pocket. Position 39 (R39) interacts with glutathione. FAD is bound by residues E52, T59, C60, and K68. An intrachain disulfide couples C60 to C65. Y122 serves as a coordination point for glutathione. A138 lines the FAD pocket. NADP(+)-binding residues include A204, I207, E210, R227, and R233. T242 is a binding site for glutathione. Position 293 (G293) interacts with NADP(+). D333 serves as a coordination point for FAD. E339 serves as a coordination point for NADP(+). T341 lines the FAD pocket. Glutathione is bound at residue R349. Residue V374 participates in NADP(+) binding. Residue K426 participates in glutathione binding. Position 473 (H473) interacts with FAD. H473 serves as the catalytic Proton acceptor.

It belongs to the class-I pyridine nucleotide-disulfide oxidoreductase family. As to quaternary structure, homodimer. It depends on FAD as a cofactor.

The protein resides in the cytoplasm. It is found in the mitochondrion. It carries out the reaction 2 glutathione + NADP(+) = glutathione disulfide + NADPH + H(+). Catalyzes the reduction of glutathione disulfide (GSSG) to reduced glutathione (GSH). Constitutes the major mechanism to maintain a high GSH:GSSG ratio in the cytosol. The polypeptide is Glutathione reductase (GLR1) (Kluyveromyces lactis (strain ATCC 8585 / CBS 2359 / DSM 70799 / NBRC 1267 / NRRL Y-1140 / WM37) (Yeast)).